Reading from the N-terminus, the 145-residue chain is ATP synthase epsilon chain (145 aa).

A disordered region spans residues 100-123 (RAQRAKQRAEDAIKTASEKHDSDE). Residues 106–123 (QRAEDAIKTASEKHDSDE) are compositionally biased toward basic and acidic residues.

This sequence belongs to the ATPase epsilon chain family. As to quaternary structure, F-type ATPases have 2 components, CF(1) - the catalytic core - and CF(0) - the membrane proton channel. CF(1) has five subunits: alpha(3), beta(3), gamma(1), delta(1), epsilon(1). CF(0) has three main subunits: a, b and c.

It is found in the cell membrane. Functionally, produces ATP from ADP in the presence of a proton gradient across the membrane. The chain is ATP synthase epsilon chain from Latilactobacillus sakei subsp. sakei (strain 23K) (Lactobacillus sakei subsp. sakei).